The primary structure comprises 158 residues: Ribonuclease H (158 aa).

The 142-residue stretch at 2-143 (PEKIIELFTD…VDALLNRVMD (142 aa)) folds into the RNase H type-1 domain. Residues D11, E49, D71, and D135 each coordinate Mg(2+).

Belongs to the RNase H family. As to quaternary structure, monomer. Mg(2+) is required as a cofactor.

Its subcellular location is the cytoplasm. The enzyme catalyses Endonucleolytic cleavage to 5'-phosphomonoester.. Endonuclease that specifically degrades the RNA of RNA-DNA hybrids. The polypeptide is Ribonuclease H (Acidithiobacillus ferrooxidans (strain ATCC 23270 / DSM 14882 / CIP 104768 / NCIMB 8455) (Ferrobacillus ferrooxidans (strain ATCC 23270))).